The primary structure comprises 106 residues: NADH-quinone oxidoreductase subunit K (106 aa).

3 consecutive transmembrane segments (helical) span residues 9–29, 35–55, and 70–90; these read LGHY…GIFL, IVML…MVAF, and FILT…VIYF.

It belongs to the complex I subunit 4L family. NDH-1 is composed of 14 different subunits. Subunits NuoA, H, J, K, L, M, N constitute the membrane sector of the complex.

The protein resides in the cell inner membrane. The catalysed reaction is a quinone + NADH + 5 H(+)(in) = a quinol + NAD(+) + 4 H(+)(out). NDH-1 shuttles electrons from NADH, via FMN and iron-sulfur (Fe-S) centers, to quinones in the respiratory chain. The immediate electron acceptor for the enzyme in this species is believed to be ubiquinone. Couples the redox reaction to proton translocation (for every two electrons transferred, four hydrogen ions are translocated across the cytoplasmic membrane), and thus conserves the redox energy in a proton gradient. The sequence is that of NADH-quinone oxidoreductase subunit K from Granulibacter bethesdensis (strain ATCC BAA-1260 / CGDNIH1).